The following is a 263-amino-acid chain: MAQDVTYSSYLDLDRILAAQHPVSGAHDEMLFIIVHQASELWLKLCLHELFAARDCIAADNLRPSFKMLSRVARAQTQLIQSWDVLSTMTPHDYSQIRPHLGRSSGFQSPQYRMMEFLLGGRNPDMVAMHEPTPEIATALREELARTSLYDEAIRLLSRRGFAIPDEVLARKLDEVWVRSEEVEAAWAEIYRDPQQHWDLYELAEKLVDLEYHFQRWRFGHLKTVERIIGFKRGTGGTKGVPYLEGVLKQAFFPELLSVRTAI.

Substrate is bound by residues 32 to 36 (FIIVH), tyrosine 94, and arginine 98. Histidine 221 serves as a coordination point for heme. Threonine 235 is a binding site for substrate.

It belongs to the tryptophan 2,3-dioxygenase family. Homotetramer. The cofactor is heme.

The catalysed reaction is L-tryptophan + O2 = N-formyl-L-kynurenine. It functions in the pathway amino-acid degradation; L-tryptophan degradation via kynurenine pathway; L-kynurenine from L-tryptophan: step 1/2. Its function is as follows. Heme-dependent dioxygenase that catalyzes the oxidative cleavage of the L-tryptophan (L-Trp) pyrrole ring and converts L-tryptophan to N-formyl-L-kynurenine. Catalyzes the oxidative cleavage of the indole moiety. In Erythrobacter litoralis (strain HTCC2594), this protein is Tryptophan 2,3-dioxygenase.